The chain runs to 282 residues: NADPH-dependent 7-cyano-7-deazaguanine reductase (282 aa).

Position 88-90 (88-90) interacts with substrate; it reads IES. 90–91 provides a ligand contact to NADPH; that stretch reads SK. Cys190 (thioimide intermediate) is an active-site residue. Asp197 serves as the catalytic Proton donor. 229-230 lines the substrate pocket; it reads HE. 258–259 is a binding site for NADPH; sequence RG.

The protein belongs to the GTP cyclohydrolase I family. QueF type 2 subfamily. Homodimer.

It localises to the cytoplasm. It catalyses the reaction 7-aminomethyl-7-carbaguanine + 2 NADP(+) = 7-cyano-7-deazaguanine + 2 NADPH + 3 H(+). It functions in the pathway tRNA modification; tRNA-queuosine biosynthesis. Functionally, catalyzes the NADPH-dependent reduction of 7-cyano-7-deazaguanine (preQ0) to 7-aminomethyl-7-deazaguanine (preQ1). In Escherichia coli (strain K12 / MC4100 / BW2952), this protein is NADPH-dependent 7-cyano-7-deazaguanine reductase.